Reading from the N-terminus, the 63-residue chain is Protein sigN172 (63 aa).

The sequence is that of Protein sigN172 from Dictyostelium discoideum (Social amoeba).